We begin with the raw amino-acid sequence, 432 residues long: Vacuolar protein sorting-associated protein 38 (432 aa).

The N-linked (GlcNAc...) asparagine glycan is linked to asparagine 20. The stretch at 216-287 forms a coiled coil; it reads LDTYQENIKM…KEAIEKLQKK (72 aa). A helical membrane pass occupies residues 348-365; the sequence is IINAMLGFYSLFIVIYSY.

This sequence belongs to the VPS38 family. In terms of assembly, component of the VPS34 PI3-kinase complex II composed of VPS15, VPS30, VPS34 and VPS38.

The protein localises to the golgi apparatus. It is found in the trans-Golgi network membrane. Its subcellular location is the endosome membrane. Functionally, involved in endosome-to-Golgi retrograde transport as part of the VPS34 PI3-kinase complex II. This complex is required for the endosome-to-Golgi retrieval of PEP1 and KEX2, and the recruitment of VPS5 and VPS7, two components of the retromer complex, to endosomal membranes (probably through generating a specific pool of phosphatidylinositol 3-phosphate allowing the recruitment of the retromer complex proteins to the endosome). Mediates the interaction between VPS30 and the VPS34-VPS15 core complex, leading to the recruitment of VPS30 to the membrane. The sequence is that of Vacuolar protein sorting-associated protein 38 from Candida glabrata (strain ATCC 2001 / BCRC 20586 / JCM 3761 / NBRC 0622 / NRRL Y-65 / CBS 138) (Yeast).